The primary structure comprises 79 residues: Conotoxin ArMSGL-0122 (79 aa).

The first 20 residues, 1–20, serve as a signal peptide directing secretion; the sequence is MSRLGIMVLTLLLLVFIVTS. Positions 21 to 44 are excised as a propeptide; that stretch reads HQDAGEKQATQRAAINFRWKRSLT. Disulfide bonds link cysteine 52-cysteine 64, cysteine 56-cysteine 73, and cysteine 63-cysteine 77. Leucine 78 carries the post-translational modification Leucine amide.

The protein belongs to the conotoxin O3 superfamily. As to expression, expressed by the venom duct.

The protein resides in the secreted. This is Conotoxin ArMSGL-0122 from Conus arenatus (Sand-dusted cone).